Consider the following 133-residue polypeptide: MTLNLCVLTPNRIVWDSKVKEIILSTNSGQIGILPNHAPIATAVDIGILRIRLNDQWLTMALMGGFARIGNNEITVLVNDAEKGSDIEPQEAQQTLEIAEANLRKAEGKRQIIEANLALRRARTRVEAINVTS.

The protein belongs to the ATPase epsilon chain family. F-type ATPases have 2 components, CF(1) - the catalytic core - and CF(0) - the membrane proton channel. CF(1) has five subunits: alpha(3), beta(3), gamma(1), delta(1), epsilon(1). CF(0) has three main subunits: a, b and c.

It is found in the plastid. The protein localises to the chloroplast thylakoid membrane. Its function is as follows. Produces ATP from ADP in the presence of a proton gradient across the membrane. The chain is ATP synthase epsilon chain, chloroplastic from Vitis vinifera (Grape).